Reading from the N-terminus, the 121-residue chain is Small ribosomal subunit protein uS13 (121 aa).

The tract at residues 93–121 (RGLPVRGQNTKNNARTRKGPRRTVANKKK) is disordered. Residues 106-121 (ARTRKGPRRTVANKKK) show a composition bias toward basic residues.

This sequence belongs to the universal ribosomal protein uS13 family. As to quaternary structure, part of the 30S ribosomal subunit. Forms a loose heterodimer with protein S19. Forms two bridges to the 50S subunit in the 70S ribosome.

Its function is as follows. Located at the top of the head of the 30S subunit, it contacts several helices of the 16S rRNA. In the 70S ribosome it contacts the 23S rRNA (bridge B1a) and protein L5 of the 50S subunit (bridge B1b), connecting the 2 subunits; these bridges are implicated in subunit movement. Contacts the tRNAs in the A and P-sites. The protein is Small ribosomal subunit protein uS13 of Bacillus licheniformis (strain ATCC 14580 / DSM 13 / JCM 2505 / CCUG 7422 / NBRC 12200 / NCIMB 9375 / NCTC 10341 / NRRL NRS-1264 / Gibson 46).